A 1062-amino-acid polypeptide reads, in one-letter code: Carbamoyl phosphate synthase large chain (1062 aa).

The interval 1-401 (MPKRTDIHKI…AMQKAVQSLE (401 aa)) is carboxyphosphate synthetic domain. ATP contacts are provided by Arg-129, Arg-169, Gly-175, Gly-176, Lys-208, Ile-210, Glu-215, Gly-241, Ile-242, His-243, Gln-284, and Glu-298. In terms of domain architecture, ATP-grasp 1 spans 133–327 (KELCQKLGEP…IAKMAAKIAI (195 aa)). The Mg(2+) site is built by Gln-284, Glu-298, and Asn-300. The Mn(2+) site is built by Gln-284, Glu-298, and Asn-300. Residues 402–546 (IDEKDLYSAK…YSTYDGENES (145 aa)) are oligomerization domain. The carbamoyl phosphate synthetic domain stretch occupies residues 547–929 (RKSGKKSVIV…ALYKAFAGAK (383 aa)). An ATP-grasp 2 domain is found at 671–861 (DQIIKSLHLH…MAQVATRVIM (191 aa)). Residues Arg-707, Asp-746, Leu-748, Glu-752, Gly-777, Val-778, His-779, Ser-780, Gln-820, and Glu-832 each coordinate ATP. Mg(2+)-binding residues include Gln-820, Glu-832, and Asn-834. Mn(2+) is bound by residues Gln-820, Glu-832, and Asn-834. The MGS-like domain occupies 930-1062 (MQLPENGNVL…NRSFATDALK (133 aa)). The interval 930-1062 (MQLPENGNVL…NRSFATDALK (133 aa)) is allosteric domain.

This sequence belongs to the CarB family. In terms of assembly, composed of two chains; the small (or glutamine) chain promotes the hydrolysis of glutamine to ammonia, which is used by the large (or ammonia) chain to synthesize carbamoyl phosphate. Tetramer of heterodimers (alpha,beta)4. The cofactor is Mg(2+). It depends on Mn(2+) as a cofactor.

The enzyme catalyses hydrogencarbonate + L-glutamine + 2 ATP + H2O = carbamoyl phosphate + L-glutamate + 2 ADP + phosphate + 2 H(+). It carries out the reaction hydrogencarbonate + NH4(+) + 2 ATP = carbamoyl phosphate + 2 ADP + phosphate + 2 H(+). It participates in amino-acid biosynthesis; L-arginine biosynthesis; carbamoyl phosphate from bicarbonate: step 1/1. It functions in the pathway pyrimidine metabolism; UMP biosynthesis via de novo pathway; (S)-dihydroorotate from bicarbonate: step 1/3. In terms of biological role, large subunit of the glutamine-dependent carbamoyl phosphate synthetase (CPSase). CPSase catalyzes the formation of carbamoyl phosphate from the ammonia moiety of glutamine, carbonate, and phosphate donated by ATP, constituting the first step of 2 biosynthetic pathways, one leading to arginine and/or urea and the other to pyrimidine nucleotides. The large subunit (synthetase) binds the substrates ammonia (free or transferred from glutamine from the small subunit), hydrogencarbonate and ATP and carries out an ATP-coupled ligase reaction, activating hydrogencarbonate by forming carboxy phosphate which reacts with ammonia to form carbamoyl phosphate. In Lactobacillus delbrueckii subsp. bulgaricus (strain ATCC BAA-365 / Lb-18), this protein is Carbamoyl phosphate synthase large chain.